The chain runs to 352 residues: Quinolinate synthase (352 aa).

Residues H48 and S69 each coordinate iminosuccinate. C114 lines the [4Fe-4S] cluster pocket. Residues 140–142 (YAN) and S157 each bind iminosuccinate. [4Fe-4S] cluster is bound at residue C201. Iminosuccinate contacts are provided by residues 227-229 (HPE) and T244. Residue C298 participates in [4Fe-4S] cluster binding.

The protein belongs to the quinolinate synthase family. Type 1 subfamily. The cofactor is [4Fe-4S] cluster.

It is found in the cytoplasm. The enzyme catalyses iminosuccinate + dihydroxyacetone phosphate = quinolinate + phosphate + 2 H2O + H(+). The protein operates within cofactor biosynthesis; NAD(+) biosynthesis; quinolinate from iminoaspartate: step 1/1. Functionally, catalyzes the condensation of iminoaspartate with dihydroxyacetone phosphate to form quinolinate. The chain is Quinolinate synthase from Pseudomonas aeruginosa (strain UCBPP-PA14).